Here is a 234-residue protein sequence, read N- to C-terminus: FAS1 domain-containing protein AFUA_8G05360 (234 aa).

The N-terminal stretch at 1–21 (MRRTLFVLFVVAFCFIGSVIA) is a signal peptide. The FAS1 domain maps to 83-231 (KPVVSDVLPK…GELWILNSVL (149 aa)).

Its subcellular location is the vacuole. The polypeptide is FAS1 domain-containing protein AFUA_8G05360 (Aspergillus fumigatus (strain ATCC MYA-4609 / CBS 101355 / FGSC A1100 / Af293) (Neosartorya fumigata)).